A 380-amino-acid chain; its full sequence is Cytochrome b (380 aa).

The next 4 membrane-spanning stretches (helical) occupy residues 34 to 54 (FGSL…FLAM), 78 to 99 (WLIR…YLHI), 114 to 134 (WNIG…GYVL), and 179 to 199 (FFTF…IHLL). The heme b site is built by His-84 and His-98. Heme b-binding residues include His-183 and His-197. An a ubiquinone-binding site is contributed by His-202. 4 helical membrane passes run 227–247 (YKDL…ALFT), 289–309 (LGGV…PILH), 321–341 (ITQI…WIGG), and 348–368 (FITI…ILFP).

The protein belongs to the cytochrome b family. In terms of assembly, the cytochrome bc1 complex contains 3 respiratory subunits (MT-CYB, CYC1 and UQCRFS1), 2 core proteins (UQCRC1 and UQCRC2) and probably 6 low-molecular weight proteins. Requires heme b as cofactor.

The protein localises to the mitochondrion inner membrane. Functionally, component of the ubiquinol-cytochrome c reductase complex (complex III or cytochrome b-c1 complex) that is part of the mitochondrial respiratory chain. The b-c1 complex mediates electron transfer from ubiquinol to cytochrome c. Contributes to the generation of a proton gradient across the mitochondrial membrane that is then used for ATP synthesis. The chain is Cytochrome b (mt-cyb) from Hemitrygon laosensis (Mekong freshwater stingray).